A 293-amino-acid chain; its full sequence is Probable endonuclease 4 (293 aa).

Residues His78, His118, Glu154, Asp188, His191, His225, Asp238, His240, and Glu270 each contribute to the Zn(2+) site.

The protein belongs to the AP endonuclease 2 family. It depends on Zn(2+) as a cofactor.

It catalyses the reaction Endonucleolytic cleavage to 5'-phosphooligonucleotide end-products.. Endonuclease IV plays a role in DNA repair. It cleaves phosphodiester bonds at apurinic or apyrimidinic (AP) sites, generating a 3'-hydroxyl group and a 5'-terminal sugar phosphate. This chain is Probable endonuclease 4, found in Vibrio vulnificus (strain CMCP6).